The following is a 540-amino-acid chain: Chaperonin GroEL 1 (540 aa).

Residues 30-33 (TLGP), lysine 51, 87-91 (DGTTT), glycine 415, 480-482 (NAA), and aspartate 496 contribute to the ATP site.

This sequence belongs to the chaperonin (HSP60) family. Forms a cylinder of 14 subunits composed of two heptameric rings stacked back-to-back. Interacts with the co-chaperonin GroES.

The protein localises to the cytoplasm. It carries out the reaction ATP + H2O + a folded polypeptide = ADP + phosphate + an unfolded polypeptide.. Its function is as follows. Together with its co-chaperonin GroES, plays an essential role in assisting protein folding. The GroEL-GroES system forms a nano-cage that allows encapsulation of the non-native substrate proteins and provides a physical environment optimized to promote and accelerate protein folding. In Bradyrhizobium diazoefficiens (strain JCM 10833 / BCRC 13528 / IAM 13628 / NBRC 14792 / USDA 110), this protein is Chaperonin GroEL 1.